Consider the following 94-residue polypeptide: Large ribosomal subunit protein uL23 (94 aa).

Belongs to the universal ribosomal protein uL23 family. In terms of assembly, part of the 50S ribosomal subunit. Contacts protein L29, and trigger factor when it is bound to the ribosome.

Its function is as follows. One of the early assembly proteins it binds 23S rRNA. One of the proteins that surrounds the polypeptide exit tunnel on the outside of the ribosome. Forms the main docking site for trigger factor binding to the ribosome. The polypeptide is Large ribosomal subunit protein uL23 (Phytoplasma australiense).